The sequence spans 730 residues: Arginine decarboxylase 1B, chloroplastic (730 aa).

The N-terminal 37 residues, 1–37 (MPALGCCVDAAVSPPPGYSFLWDSSLPAPEIFPSGVP), are a transit peptide targeting the chloroplast. Lys157 carries the N6-(pyridoxal phosphate)lysine modification. Pyridoxal 5'-phosphate-binding positions include Ser309, Gly346, and 395 to 398 (ESGR). 460 to 461 (YA) serves as a coordination point for substrate. Cys548 (proton donor; shared with dimeric partner) is an active-site residue. Asp549 lines the substrate pocket. Tyr590 is a pyridoxal 5'-phosphate binding site.

This sequence belongs to the Orn/Lys/Arg decarboxylase class-II family. SpeA subfamily. Mg(2+) is required as a cofactor. It depends on pyridoxal 5'-phosphate as a cofactor.

The protein resides in the plastid. Its subcellular location is the chloroplast. The enzyme catalyses L-arginine + H(+) = agmatine + CO2. It functions in the pathway alkaloid biosynthesis; nicotine biosynthesis. The protein operates within amine and polyamine biosynthesis; agmatine biosynthesis; agmatine from L-arginine: step 1/1. Functionally, involved in the biosynthesis of pyridine alkaloid natural products, leading mainly to the production of anabasine, anatabine, nicotine and nornicotine, effective deterrents against herbivores with antiparasitic and pesticide properties (neurotoxins); nornicotine serves as the precursor in the synthesis of the carcinogen compound N'-nitrosonornicotine (NNN). Required for the biosynthesis of putrescine. Catalyzes the first step of polyamine (PA) biosynthesis to produce putrescine from arginine. The polypeptide is Arginine decarboxylase 1B, chloroplastic (Nicotiana tabacum (Common tobacco)).